Here is a 455-residue protein sequence, read N- to C-terminus: Folate transporter 2 (455 aa).

The next 8 membrane-spanning stretches (helical) occupy residues 42–64 (IVVY…IYYL), 84–103 (YIPF…FSIF), 110–131 (YLFL…LNLS), 137–157 (LILF…EALV), 177–195 (IASK…GYFL), 201–221 (EYIF…CLFL), 242–261 (FINT…YMSG), and 281–301 (SFMG…IIIY). The N-linked (GlcNAc...) asparagine glycan is linked to asparagine 307. Helical transmembrane passes span 313–331 (TLII…PIIL) and 347–367 (VLSG…PLFI). An N-linked (GlcNAc...) asparagine glycan is attached at asparagine 416. A helical membrane pass occupies residues 417–438 (LSLYILTCGFFLLFSLTLVPLL).

This sequence belongs to the major facilitator superfamily. Folate-biopterin transporter (TC 2.A.71) family.

It localises to the cell membrane. It carries out the reaction folate(in) + H(+)(in) = folate(out) + H(+)(out). The catalysed reaction is (6S)-5-methyl-5,6,7,8-tetrahydrofolate(in) + H(+)(in) = (6S)-5-methyl-5,6,7,8-tetrahydrofolate(out) + H(+)(out). Transport of folates is inhibited by probenecid and methotrexate. In terms of biological role, folate transporter with broad substrate specificity. Transports folic acid, folinic acid, pteroic acid, dihydropteroic acid, the folate precursor p-amino benzoic acid (pABA) and the human folate catabolite pABA monoglutamate. Can transport 5-methyltetrahydrofolate with low efficiency. This is Folate transporter 2 from Plasmodium falciparum (isolate 3D7).